A 1465-amino-acid chain; its full sequence is Transcriptional elongation regulator MINIYO (1465 aa).

Disordered regions lie at residues 27–85, 186–211, and 1113–1135; these read KGIS…AEER, LNAS…ESDI, and TIHE…SSTI.

Belongs to the RPAP1 family. Interacts with HAG3, NRPB3 and NRPB10L. Expressed in root and shoot apices and in leaf and flower primordia. Detected in the endosperm, embryo, meristems and in organ primordia, but not in mature cells. Found exclusively in the vascular bundles in mature leaves.

It localises to the cytoplasm. Its subcellular location is the nucleus. Positive regulator of transcriptional elongation that is essential for cells to initiate differentiation. Interacts with RNA polymerase II and the Elongator complex and is required to sustain global levels of transcriptional elongation activity, specifically in differentiating tissues. The protein is Transcriptional elongation regulator MINIYO of Arabidopsis thaliana (Mouse-ear cress).